A 46-amino-acid polypeptide reads, in one-letter code: Escargot/snail protein homolog (46 aa).

C2H2-type zinc fingers lie at residues 1-4, 8-30, and 36-46; these read IRTH, CKCP…TTHH, and FSCQHCNRAFA.

This sequence belongs to the snail C2H2-type zinc-finger protein family.

The protein resides in the nucleus. The protein is Escargot/snail protein homolog of Oryzias latipes (Japanese rice fish).